A 341-amino-acid polypeptide reads, in one-letter code: Anthranilate phosphoribosyltransferase (341 aa).

Residues G81, 84 to 85 (GD), S89, 91 to 94 (NIST), 109 to 117 (KHGNRSASS), and S121 each bind 5-phospho-alpha-D-ribose 1-diphosphate. G81 contributes to the anthranilate binding site. Residue S93 coordinates Mg(2+). Position 112 (N112) interacts with anthranilate. R167 provides a ligand contact to anthranilate. 2 residues coordinate Mg(2+): D225 and E226.

It belongs to the anthranilate phosphoribosyltransferase family. Homodimer. Mg(2+) serves as cofactor.

The catalysed reaction is N-(5-phospho-beta-D-ribosyl)anthranilate + diphosphate = 5-phospho-alpha-D-ribose 1-diphosphate + anthranilate. Its pathway is amino-acid biosynthesis; L-tryptophan biosynthesis; L-tryptophan from chorismate: step 2/5. In terms of biological role, catalyzes the transfer of the phosphoribosyl group of 5-phosphorylribose-1-pyrophosphate (PRPP) to anthranilate to yield N-(5'-phosphoribosyl)-anthranilate (PRA). This chain is Anthranilate phosphoribosyltransferase, found in Nocardioides sp. (strain ATCC BAA-499 / JS614).